A 760-amino-acid polypeptide reads, in one-letter code: Transglutaminase-activating metalloprotease (760 aa).

Positions 1-33 (MRPTPQRRAVATGALVAVTAMLAVGVQTTSANA) are cleaved as a signal peptide. 2 disordered regions span residues 32-59 (NAGQ…PVKL) and 228-265 (KQGT…KTYN). Positions 34 to 229 (GQDKAAHPAP…KLFEFQGVKQ (196 aa)) are excised as a propeptide. A compositionally biased stretch (polar residues) spans 228–257 (KQGTGNSQHSGQVQIGTTKSGSSYQMNDTT). Histidine 366 provides a ligand contact to Zn(2+). The active site involves glutamate 367. Histidine 370 and glutamate 390 together coordinate Zn(2+). Histidine 454 (proton donor) is an active-site residue. Residues 640 to 760 (TVNTTGGGSV…GTIDKWRLTF (121 aa)) form the P/Homo B domain.

Belongs to the peptidase M4 family. The cofactor is Zn(2+).

It is found in the secreted. Cleaves the N-terminal propeptide of transglutaminase thus activating it. This chain is Transglutaminase-activating metalloprotease, found in Streptomyces mobaraensis (Streptoverticillium mobaraense).